The chain runs to 371 residues: Protein NDRG2 (371 aa).

Residues Met1–Glu22 form a disordered region. Residue Ala2 is modified to N-acetylalanine. Thr20 carries the phosphothreonine modification. A phosphoserine mark is found at Ser326 and Ser328. Residue Thr330 is modified to Phosphothreonine; by SGK1. At Ser332 the chain carries Phosphoserine; by PKC/PRKCQ or SGK1. Position 334 is a phosphothreonine (Thr334). Positions Thr334–Cys371 are disordered. Phosphoserine is present on residues Ser335, Ser338, and Ser344. Thr348 carries the post-translational modification Phosphothreonine; by PKB/AKT1 or SGK1. A phosphoserine mark is found at Ser350, Ser352, Ser353, and Ser355. Position 357 is a phosphothreonine (Thr357). Ser370 is modified (phosphoserine).

The protein belongs to the NDRG family. As to quaternary structure, interacts with CTNNB1. Expressed at highest levels in brain, heart and liver, and at lower levels in kidney, colon, skeletal muscle, adrenal gland, ovary and uterus (at protein level).

It localises to the cytoplasm. The protein localises to the perinuclear region. It is found in the cell projection. The protein resides in the growth cone. In terms of biological role, contributes to the regulation of the Wnt signaling pathway. Down-regulates CTNNB1-mediated transcriptional activation of target genes, such as CCND1, and may thereby act as tumor suppressor. May be involved in dendritic cell and neuron differentiation. The protein is Protein NDRG2 (Ndrg2) of Mus musculus (Mouse).